Reading from the N-terminus, the 217-residue chain is Outer-membrane lipoprotein LolB (217 aa).

Positions 1 to 20 (MSKALRTLALSGLVLVGLSA) are cleaved as a signal peptide. Cys-21 carries N-palmitoyl cysteine lipidation. A lipid anchor (S-diacylglycerol cysteine) is attached at Cys-21.

It belongs to the LolB family. As to quaternary structure, monomer.

The protein localises to the cell outer membrane. Functionally, plays a critical role in the incorporation of lipoproteins in the outer membrane after they are released by the LolA protein. This Xanthomonas oryzae pv. oryzae (strain MAFF 311018) protein is Outer-membrane lipoprotein LolB.